The following is a 208-amino-acid chain: FMN-dependent NADH:quinone oxidoreductase (208 aa).

Residues Ser-10, 16–18 (SVS), 94–97 (MYNF), and 138–141 (SRGG) contribute to the FMN site.

This sequence belongs to the azoreductase type 1 family. In terms of assembly, homodimer. FMN is required as a cofactor.

It catalyses the reaction 2 a quinone + NADH + H(+) = 2 a 1,4-benzosemiquinone + NAD(+). The enzyme catalyses N,N-dimethyl-1,4-phenylenediamine + anthranilate + 2 NAD(+) = 2-(4-dimethylaminophenyl)diazenylbenzoate + 2 NADH + 2 H(+). Quinone reductase that provides resistance to thiol-specific stress caused by electrophilic quinones. Functionally, also exhibits azoreductase activity. Catalyzes the reductive cleavage of the azo bond in aromatic azo compounds to the corresponding amines. The polypeptide is FMN-dependent NADH:quinone oxidoreductase (Hyphomonas neptunium (strain ATCC 15444)).